Consider the following 320-residue polypeptide: Cytochrome c biogenesis protein CcsA (320 aa).

Helical transmembrane passes span 9–29 (ILAHISFSLILVVTLIYWGTL), 36–56 (LSSSGGKGMIVTFLCTTGLLI), 70–90 (LYESFMFLSWSSSVFHILLEV), 97–117 (WLGAITAPSAMLTHGFATLGL), 143–163 (ILFSYATLLCGSLASIALLVI), 227–247 (AIGLGFSLSTIGTLSGAIWAN), 254–274 (WSWDPKETWALITWTIFAIYL), and 288–308 (AIVASLGFFIVWIRYLGVNLL).

Belongs to the CcmF/CycK/Ccl1/NrfE/CcsA family. As to quaternary structure, may interact with Ccs1.

The protein resides in the plastid. Its subcellular location is the chloroplast thylakoid membrane. Its function is as follows. Required during biogenesis of c-type cytochromes (cytochrome c6 and cytochrome f) at the step of heme attachment. This is Cytochrome c biogenesis protein CcsA from Pinus thunbergii (Japanese black pine).